The chain runs to 497 residues: Vacuolar-processing enzyme beta-isozyme 1 (497 aa).

The N-terminal stretch at 1–23 is a signal peptide; that stretch reads MAARCWVWGFVVALLAVAAAADG. A glycan (N-linked (GlcNAc...) asparagine) is linked at Asn-153. His-180 is an active-site residue. Cys-222 acts as the Nucleophile in catalysis. Cys-255 and Cys-269 are joined by a disulfide. Asn-340 carries N-linked (GlcNAc...) asparagine glycosylation. Cystine bridges form between Cys-432/Cys-462 and Cys-444/Cys-479.

The protein belongs to the peptidase C13 family. In terms of processing, auto-catalytic activation.

It localises to the protein storage vacuole. It catalyses the reaction Hydrolysis of proteins and small molecule substrates at -Asn-|-Xaa- bonds.. Functionally, asparagine-specific endopeptidase that may be involved in processing of proteins targeted to vacuoles. Cysteine protease required for post-translational proteolysis of seed storage proteins in the protein storage vacuole (PSV) of developing seeds, by processing of proglutelin precursor to mature glutelin subunits, thus contributing to the formation of protein crystalline structures in PSV. The sequence is that of Vacuolar-processing enzyme beta-isozyme 1 from Oryza sativa subsp. indica (Rice).